The following is a 270-amino-acid chain: MSEMEQQPIFKIALGIEYDGSKYYGWQRQNEVRSVQEKLEKALSQVANEPITVFCAGRTDAGVHGTGQVVHFETRAQRKDAAWTLGVNANLPGDIAVRWVKHVPADFHARFSATARRYRYVIYNHRLRPAVLSHGVTHFHQPLDAERMQRAAQCLLGENDFTSFRAVQCQSRTPWRNVMHINVTRYGAYVVVDIKANAFVHHMVRNIVGSLMEVGAGNQPESWMAELLAAKDRTLAAATAKAEGLYLVSVDYPAHYDLPVLPMGPLFLAD.

The active-site Nucleophile is Asp60. The segment at 107–111 (FHARF) is RNA binding. A substrate-binding site is contributed by Tyr118. The interval 168–172 (QCQSR) is interaction with tRNA.

This sequence belongs to the tRNA pseudouridine synthase TruA family. As to quaternary structure, homodimer.

The enzyme catalyses uridine(38/39/40) in tRNA = pseudouridine(38/39/40) in tRNA. In terms of biological role, formation of pseudouridine at positions 38, 39 and 40 in the anticodon stem and loop of transfer RNAs. This Klebsiella pneumoniae (strain 342) protein is tRNA pseudouridine synthase A.